The following is a 506-amino-acid chain: bZIP transcription factor TGA10 (506 aa).

Disordered regions lie at residues 22 to 50 (VSYMDSSNKNQDPSESNNQISFGGQHQHH) and 113 to 218 (PSSI…KTLR). 4 stretches are compositionally biased toward polar residues: residues 25 to 45 (MDSSNKNQDPSESNNQISFGG), 113 to 124 (PSSIQEQRQNSG), 142 to 152 (PSTTNKMNTGL), and 160 to 180 (SKRSSQPSMELSNNLKNNDAP). The span at 207–216 (DAPKTPDPKT) shows a compositional bias: basic and acidic residues. The 45-residue stretch at 213 to 257 (DPKTLRRLAQNREAARKSRLRKKAYVQQLESSRIRLTQLEQELQR) folds into the bZIP domain. The interval 215–235 (KTLRRLAQNREAARKSRLRKK) is basic motif. Positions 217–224 (LRRLAQNR) match the Nuclear localization signal motif. The tract at residues 241–255 (LESSRIRLTQLEQEL) is leucine-zipper. Residues 288-502 (AAVFDMEYAR…RALSSLWHAR (215 aa)) form the DOG1 domain.

It belongs to the bZIP family. In terms of assembly, binds DNA as a dimer. Interacts with TGA2.2. In terms of tissue distribution, specifically expressed in roots.

Its subcellular location is the nucleus. In terms of biological role, transcription activator that binds to as1-like elements (5'-TGACGTAAgggaTGACGCA-3') in promoters of target genes. Regulates transcription in response to plant signaling molecules salicylic acid (SA), methyl jasmonate (MJ) and auxin (2,4D) only in leaves. Prevents lateral branching and may repress defense signaling. The chain is bZIP transcription factor TGA10 from Nicotiana tabacum (Common tobacco).